Reading from the N-terminus, the 318-residue chain is Methionyl-tRNA formyltransferase (318 aa).

Position 112–115 (112–115 (SILP)) interacts with (6S)-5,6,7,8-tetrahydrofolate.

This sequence belongs to the Fmt family.

It catalyses the reaction L-methionyl-tRNA(fMet) + (6R)-10-formyltetrahydrofolate = N-formyl-L-methionyl-tRNA(fMet) + (6S)-5,6,7,8-tetrahydrofolate + H(+). Functionally, attaches a formyl group to the free amino group of methionyl-tRNA(fMet). The formyl group appears to play a dual role in the initiator identity of N-formylmethionyl-tRNA by promoting its recognition by IF2 and preventing the misappropriation of this tRNA by the elongation apparatus. The chain is Methionyl-tRNA formyltransferase from Shewanella baltica (strain OS223).